The primary structure comprises 502 residues: Glycerol kinase (502 aa).

T14 serves as a coordination point for ADP. T14, T15, and S16 together coordinate ATP. T14 provides a ligand contact to sn-glycerol 3-phosphate. R18 contributes to the ADP binding site. Sn-glycerol 3-phosphate is bound by residues R84, E85, Y136, and D246. Glycerol is bound by residues R84, E85, Y136, D246, and Q247. Residues T268 and G311 each coordinate ADP. ATP contacts are provided by T268, G311, Q315, and G412. ADP-binding residues include G412 and N416.

Belongs to the FGGY kinase family. As to quaternary structure, homotetramer and homodimer (in equilibrium). Heterodimer with EIIA-Glc. Binds 1 zinc ion per glycerol kinase EIIA-Glc dimer. The zinc ion is important for dimerization.

It carries out the reaction glycerol + ATP = sn-glycerol 3-phosphate + ADP + H(+). The protein operates within polyol metabolism; glycerol degradation via glycerol kinase pathway; sn-glycerol 3-phosphate from glycerol: step 1/1. With respect to regulation, activity of this regulatory enzyme is affected by several metabolites. Allosterically and non-competitively inhibited by fructose 1,6-bisphosphate (FBP) and unphosphorylated phosphocarrier protein EIIA-Glc (III-Glc), an integral component of the bacterial phosphotransferase (PTS) system. In terms of biological role, key enzyme in the regulation of glycerol uptake and metabolism. Catalyzes the phosphorylation of glycerol to yield sn-glycerol 3-phosphate. This chain is Glycerol kinase, found in Escherichia coli O7:K1 (strain IAI39 / ExPEC).